Here is a 701-residue protein sequence, read N- to C-terminus: Elongation factor G (701 aa).

The region spanning 8 to 286 is the tr-type G domain; sequence DRVRNIGIIA…AVVLLLPSPL (279 aa). GTP contacts are provided by residues 17–24, 85–89, and 139–142; these read AHIDAGKT, DTPGH, and NKMD.

Belongs to the TRAFAC class translation factor GTPase superfamily. Classic translation factor GTPase family. EF-G/EF-2 subfamily.

It is found in the cytoplasm. Catalyzes the GTP-dependent ribosomal translocation step during translation elongation. During this step, the ribosome changes from the pre-translocational (PRE) to the post-translocational (POST) state as the newly formed A-site-bound peptidyl-tRNA and P-site-bound deacylated tRNA move to the P and E sites, respectively. Catalyzes the coordinated movement of the two tRNA molecules, the mRNA and conformational changes in the ribosome. This Herpetosiphon aurantiacus (strain ATCC 23779 / DSM 785 / 114-95) protein is Elongation factor G.